Reading from the N-terminus, the 132-residue chain is Histone H2A-alpha (132 aa).

Ser-2 bears the N-acetylserine mark. Lys-5 and Lys-9 each carry N6-acetyllysine. Gln-106 carries the post-translational modification N5-methylglutamine. Ser-129 carries the post-translational modification Phosphoserine. Positions 129 to 130 (SQ) match the [ST]-Q motif motif.

This sequence belongs to the histone H2A family. As to quaternary structure, the nucleosome is a histone octamer containing two molecules each of H2A, H2B, H3 and H4 assembled in one H3-H4 heterotetramer and two H2A-H2B heterodimers. The octamer wraps approximately 147 bp of DNA. Interacts with mdb1 (via BRCT domain) in vitro; this interaction requires phosphorylation of this protein at the S/T-Q motif. Post-translationally, phosphorylated to form H2AS128ph (gamma-H2A) in response to DNA double-strand breaks (DSBs) generated by exogenous genotoxic agents and by stalled replication forks. Phosphorylation is dependent on the DNA damage checkpoint kinases rad3/ATR and tel1/ATM, spreads on either side of a detected DSB site and may mark the surrounding chromatin for recruitment of proteins required for DNA damage signaling and repair. Gamma-H2A is required for recruiting crb2, a modulator of DNA damage checkpoint signaling, to DSB sites. Gamma-H2A is removed from the DNA prior to the strand invasion-primer extension step of the repair process and subsequently dephosphorylated. Dephosphorylation is necessary for efficient recovery from the DNA damage checkpoint. In terms of processing, acetylated by esa1 to form H2AK4ac and H2AK7ac.

The protein localises to the nucleus. The protein resides in the chromosome. Functionally, core component of nucleosome which plays a central role in DNA double strand break (DSB) repair. Nucleosomes wrap and compact DNA into chromatin, limiting DNA accessibility to the cellular machineries which require DNA as a template. Histones thereby play a central role in transcription regulation, DNA repair, DNA replication and chromosomal stability. DNA accessibility is regulated via a complex set of post-translational modifications of histones, also called histone code, and nucleosome remodeling. This chain is Histone H2A-alpha (hta1), found in Schizosaccharomyces pombe (strain 972 / ATCC 24843) (Fission yeast).